Reading from the N-terminus, the 540-residue chain is Early growth response protein 1 (540 aa).

2 disordered regions span residues 1–105 and 162–240; these read MAAA…AESF and VSMT…PAYP. Positions 64 to 75 are enriched in gly residues; it reads SSGGGGGGGGGS. A compositionally biased stretch (low complexity) spans 167 to 190; the sequence is PPATSSSASSPAASSSASQSPPLS. Residues 192–201 show a composition bias toward polar residues; the sequence is AVQSNDSSPI. K304 participates in a covalent cross-link: Glycyl lysine isopeptide (Lys-Gly) (interchain with G-Cter in SUMO2). Residues 317 to 337 are disordered; that stretch reads PSRMRKYPNRPSKTPPHERPY. A C2H2-type 1 zinc finger spans residues 337 to 361; that stretch reads YACPVESCDRRFSRSDELTRHIRIH. The C2H2-type 2; degenerate zinc-finger motif lies at 366 to 388; that stretch reads PQCRISMRNFSRSDHLTTHIRTH. The segment at 394 to 416 adopts a C2H2-type 3 zinc-finger fold; sequence FACDICGRKFARSDERKRHTKIH. Residues 407–482 form a disordered region; sequence DERKRHTKIH…SPGSSTYPSP (76 aa). The span at 411–421 shows a compositional bias: basic residues; sequence RHTKIHLRQKD. The segment covering 427–482 has biased composition (low complexity); the sequence is SAASAATSSLPSYPSPVATSYPSPATTSYPSPATTSYPSPVPTSYSSPGSSTYPSP.

Belongs to the EGR C2H2-type zinc-finger protein family. In terms of assembly, interacts with SNAI1 and SP1 upon 12-O-tetradecanoylphorbol-13-acetate (TPA) induction.

The protein resides in the nucleus. Its subcellular location is the cytoplasm. Its function is as follows. Transcriptional regulator. Recognizes and binds to the DNA sequence 5'-GCG(T/G)GGGCG-3'(EGR-site) in the promoter region of target genes. Binds double-stranded target DNA, irrespective of the cytosine methylation status. Regulates the transcription of numerous target genes, and thereby plays an important role in regulating the response to growth factors, DNA damage, and ischemia. Plays a role in the regulation of cell survival, proliferation and cell death. Activates expression of p53/TP53 and TGFB1, and thereby helps prevent tumor formation. Required for normal progress through mitosis and normal proliferation of hepatocytes after partial hepatectomy. Mediates responses to ischemia and hypoxia; regulates the expression of proteins such as IL1B and CXCL2 that are involved in inflammatory processes and development of tissue damage after ischemia. Regulates biosynthesis of luteinizing hormone (LHB) in the pituitary. Regulates the amplitude of the expression rhythms of clock genes: BMAL1, PER2 and NR1D1 in the liver via the activation of PER1 (clock repressor) transcription. Regulates the rhythmic expression of core-clock gene BMAL1 in the suprachiasmatic nucleus (SCN). The chain is Early growth response protein 1 (EGR1) from Bos taurus (Bovine).